A 250-amino-acid chain; its full sequence is S-adenosyl-L-methionine-dependent 2-deoxy-scyllo-inosamine dehydrogenase (250 aa).

Residues C16, C20, C23, C169, C187, and E223 each coordinate [4Fe-4S] cluster.

It belongs to the radical SAM superfamily. [4Fe-4S] cluster serves as cofactor.

It carries out the reaction 2-deoxy-scyllo-inosamine + S-adenosyl-L-methionine = 3-amino-2,3-dideoxy-scyllo-inosose + 5'-deoxyadenosine + L-methionine + H(+). The protein operates within antibiotic biosynthesis; butirosin biosynthesis. In terms of biological role, catalyzes the radical S-adenosyl-L-methionine (SAM)-dependent two-electron oxidation of 2-deoxy-scyllo-inosamine (DOIA) to amino-dideoxy-scyllo-inosose (amino-DOI) in the biosynthetic pathway of butirosin. This Niallia circulans (Bacillus circulans) protein is S-adenosyl-L-methionine-dependent 2-deoxy-scyllo-inosamine dehydrogenase (btrN).